The following is a 367-amino-acid chain: Tetraacyldisaccharide 4'-kinase (367 aa).

68 to 75 (VLGGSGKT) is an ATP binding site.

The protein belongs to the LpxK family.

It carries out the reaction a lipid A disaccharide + ATP = a lipid IVA + ADP + H(+). Its pathway is glycolipid biosynthesis; lipid IV(A) biosynthesis; lipid IV(A) from (3R)-3-hydroxytetradecanoyl-[acyl-carrier-protein] and UDP-N-acetyl-alpha-D-glucosamine: step 6/6. Transfers the gamma-phosphate of ATP to the 4'-position of a tetraacyldisaccharide 1-phosphate intermediate (termed DS-1-P) to form tetraacyldisaccharide 1,4'-bis-phosphate (lipid IVA). The sequence is that of Tetraacyldisaccharide 4'-kinase from Chlamydia caviae (strain ATCC VR-813 / DSM 19441 / 03DC25 / GPIC) (Chlamydophila caviae).